The sequence spans 729 residues: Catalase-peroxidase (729 aa).

The tryptophyl-tyrosyl-methioninium (Trp-Tyr) (with M-244) cross-link spans 95-218 (WHSAGTYRGA…LAAVEMGLVY (124 aa)). The active-site Proton acceptor is H96. A cross-link (tryptophyl-tyrosyl-methioninium (Tyr-Met) (with W-95)) is located at residues 218–244 (YVNPEGPHGHPDPVASGPDVRDTFARM). Heme b is bound at residue H259.

This sequence belongs to the peroxidase family. Peroxidase/catalase subfamily. As to quaternary structure, homodimer or homotetramer. The cofactor is heme b. Post-translationally, formation of the three residue Trp-Tyr-Met cross-link is important for the catalase, but not the peroxidase activity of the enzyme.

The enzyme catalyses H2O2 + AH2 = A + 2 H2O. It carries out the reaction 2 H2O2 = O2 + 2 H2O. Bifunctional enzyme with both catalase and broad-spectrum peroxidase activity. This is Catalase-peroxidase from Synechococcus sp. (strain CC9605).